The chain runs to 220 residues: Endonuclease NucS (220 aa).

It belongs to the NucS endonuclease family.

Its subcellular location is the cytoplasm. Functionally, cleaves both 3' and 5' ssDNA extremities of branched DNA structures. The protein is Endonuclease NucS of Frankia alni (strain DSM 45986 / CECT 9034 / ACN14a).